Consider the following 56-residue polypeptide: U-megalopygitoxin(2)-Mo9 (56 aa).

Residues 1–25 (MKFIVLLLIVTSVLMMFAVTTEASP) form the signal peptide. Gln26 carries the post-translational modification Pyrrolidone carboxylic acid. A Threonine amide modification is found at Thr55.

It belongs to the caterpillar 2 family. Post-translationally, contains 2 disulfide bonds. Expressed by the venom apparatus.

The protein localises to the secreted. Functionally, probable toxin. This is U-megalopygitoxin(2)-Mo9 from Megalopyge opercularis (Southern flannel moth).